Here is a 282-residue protein sequence, read N- to C-terminus: Bifunctional protein FolD (282 aa).

NADP(+) is bound by residues 165 to 167 (GRG), Thr-192, and Val-233.

It belongs to the tetrahydrofolate dehydrogenase/cyclohydrolase family. As to quaternary structure, homodimer.

It catalyses the reaction (6R)-5,10-methylene-5,6,7,8-tetrahydrofolate + NADP(+) = (6R)-5,10-methenyltetrahydrofolate + NADPH. It carries out the reaction (6R)-5,10-methenyltetrahydrofolate + H2O = (6R)-10-formyltetrahydrofolate + H(+). It participates in one-carbon metabolism; tetrahydrofolate interconversion. Catalyzes the oxidation of 5,10-methylenetetrahydrofolate to 5,10-methenyltetrahydrofolate and then the hydrolysis of 5,10-methenyltetrahydrofolate to 10-formyltetrahydrofolate. The polypeptide is Bifunctional protein FolD (Mycobacterium leprae (strain Br4923)).